Here is a 124-residue protein sequence, read N- to C-terminus: S-adenosylmethionine decarboxylase proenzyme (124 aa).

Residue Ser63 is the Schiff-base intermediate with substrate; via pyruvic acid of the active site. Ser63 is modified (pyruvic acid (Ser); by autocatalysis). His68 acts as the Proton acceptor; for processing activity in catalysis. Cys83 acts as the Proton donor; for catalytic activity in catalysis.

The protein belongs to the prokaryotic AdoMetDC family. Type 1 subfamily. Heterotetramer of two alpha and two beta chains arranged as a dimer of alpha/beta heterodimers. Requires pyruvate as cofactor. Is synthesized initially as an inactive proenzyme. Formation of the active enzyme involves a self-maturation process in which the active site pyruvoyl group is generated from an internal serine residue via an autocatalytic post-translational modification. Two non-identical subunits are generated from the proenzyme in this reaction, and the pyruvate is formed at the N-terminus of the alpha chain, which is derived from the carboxyl end of the proenzyme. The post-translation cleavage follows an unusual pathway, termed non-hydrolytic serinolysis, in which the side chain hydroxyl group of the serine supplies its oxygen atom to form the C-terminus of the beta chain, while the remainder of the serine residue undergoes an oxidative deamination to produce ammonia and the pyruvoyl group blocking the N-terminus of the alpha chain.

It carries out the reaction S-adenosyl-L-methionine + H(+) = S-adenosyl 3-(methylsulfanyl)propylamine + CO2. It participates in amine and polyamine biosynthesis; S-adenosylmethioninamine biosynthesis; S-adenosylmethioninamine from S-adenosyl-L-methionine: step 1/1. Functionally, catalyzes the decarboxylation of S-adenosylmethionine to S-adenosylmethioninamine (dcAdoMet), the propylamine donor required for the synthesis of the polyamines spermine and spermidine from the diamine putrescine. This chain is S-adenosylmethionine decarboxylase proenzyme, found in Anoxybacillus flavithermus (strain DSM 21510 / WK1).